The following is a 140-amino-acid chain: Small ribosomal subunit protein uS19 (140 aa).

This sequence belongs to the universal ribosomal protein uS19 family.

In terms of biological role, protein S19 forms a complex with S13 that binds strongly to the 16S ribosomal RNA. The chain is Small ribosomal subunit protein uS19 from Natronomonas pharaonis (strain ATCC 35678 / DSM 2160 / CIP 103997 / JCM 8858 / NBRC 14720 / NCIMB 2260 / Gabara) (Halobacterium pharaonis).